The primary structure comprises 216 residues: Redox-sensing transcriptional repressor Rex (216 aa).

The H-T-H motif DNA-binding region spans 16-55 (VYYRYLNVLLNANKHRVSSTELSEAVQVDSATIRRDFSYF). Position 90–95 (90–95 (GVGSLG)) interacts with NAD(+).

The protein belongs to the transcriptional regulatory Rex family. In terms of assembly, homodimer.

The protein localises to the cytoplasm. Modulates transcription in response to changes in cellular NADH/NAD(+) redox state. In Limosilactobacillus fermentum (strain NBRC 3956 / LMG 18251) (Lactobacillus fermentum), this protein is Redox-sensing transcriptional repressor Rex.